Reading from the N-terminus, the 186-residue chain is ATP synthase subunit b, chloroplastic (186 aa).

The helical transmembrane segment at 27-49 (LATNPINLSVVLGVLIFFGKGVL) threads the bilayer.

Belongs to the ATPase B chain family. F-type ATPases have 2 components, F(1) - the catalytic core - and F(0) - the membrane proton channel. F(1) has five subunits: alpha(3), beta(3), gamma(1), delta(1), epsilon(1). F(0) has four main subunits: a(1), b(1), b'(1) and c(10-14). The alpha and beta chains form an alternating ring which encloses part of the gamma chain. F(1) is attached to F(0) by a central stalk formed by the gamma and epsilon chains, while a peripheral stalk is formed by the delta, b and b' chains.

It is found in the plastid. It localises to the chloroplast thylakoid membrane. F(1)F(0) ATP synthase produces ATP from ADP in the presence of a proton or sodium gradient. F-type ATPases consist of two structural domains, F(1) containing the extramembraneous catalytic core and F(0) containing the membrane proton channel, linked together by a central stalk and a peripheral stalk. During catalysis, ATP synthesis in the catalytic domain of F(1) is coupled via a rotary mechanism of the central stalk subunits to proton translocation. Functionally, component of the F(0) channel, it forms part of the peripheral stalk, linking F(1) to F(0). This Illicium oligandrum (Star anise) protein is ATP synthase subunit b, chloroplastic.